The sequence spans 995 residues: MNNKKTATNRKGMIPNRLNKFSIRKYSVGTASILVGTTLIFGLSGHEAKAAEHTNGELNQSKNETTAPSENKTTKKVDSRQLKDNTQTATADQPKVTMSDSATVKETSSNMQSPQNATANQSTTKTSNVTTNDKSSTTYSNETDKSNLTQAKDVSTTPKTTTIKPRTLNRMAVNTVAAPQQGTNVNDKVHFSNIDIAIDKGHVNQTTGKTEFWATSSDVLKLKANYTIDDSVKEGDTFTFKYGQYFRPGSVRLPSQTQNLYNAQGNIIAKGIYDSTTNTTTYTFTNYVDQYTNVRGSFEQVAFAKRKNATTDKTAYKMEVTLGNDTYSEEIIVDYGNKKAQPLISSTNYINNEDLSRNMTAYVNQPKNTYTKQTFVTNLTGYKFNPNAKNFKIYEVTDQNQFVDSFTPDTSKLKDVTDQFDVIYSNDNKTATVDLMKGQTSSNKQYIIQQVAYPDNSSTDNGKIDYTLDTDKTKYSWSNSYSNVNGSSTANGDQKKYNLGDYVWEDTNKDGKQDANEKGIKGVYVILKDSNGKELDRTTTDENGKYQFTGLSNGTYSVEFSTPAGYTPTTANVGTDDAVDSDGLTTTGVIKDADNMTLDSGFYKTPKYSLGDYVWYDSNKDGKQDSTEKGIKGVKVTLQNEKGEVIGTTETDENGKYRFDNLDSGKYKVIFEKPAGLTQTGTNTTEDDKDADGGEVDVTITDHDDFTLDNGYYEEETSDSDSDSDSDSDSDSDSDSDSDSDSDSDSDSDSDSDSDSDSDSDSDSDSDSDSDSDSDSDSDSDSDSDSDSDSDSDSDSDSDSDSDSDSDSDSDSDSDSDSDSDSDSDSDSDSDSDSDSDSDSDSDSDSDSDSDSDSDSDNDSDSDSDSDSDSDSDSDSDSDSDSDSDSDSDSDSDSDSDSDSDSDSDSDSDSDSDSDSDSDSDSDNDSDSDSDSDSDAGKHTPAKPMSTVKDQHKTAKALPETGSENNNSNNGTLFGGLFAALGSLLLFGRRKKQNK.

The first 50 residues, 1-50, serve as a signal peptide directing secretion; the sequence is MNNKKTATNRKGMIPNRLNKFSIRKYSVGTASILVGTTLIFGLSGHEAKA. Residues 21–32 carry the YSIRK-G/S signaling motif motif; that stretch reads FSIRKYSVGTAS. Residues 51–164 form a disordered region; sequence AEHTNGELNQ…STTPKTTTIK (114 aa). Positions 51–495 are ligand binding A region; the sequence is AEHTNGELNQ…GSSTANGDQK (445 aa). Positions 56–71 are enriched in polar residues; sequence GELNQSKNETTAPSEN. Positions 72–83 are enriched in basic and acidic residues; the sequence is KTTKKVDSRQLK. Polar residues predominate over residues 84–155; sequence DNTQTATADQ…SNLTQAKDVS (72 aa). 2 consecutive CNA-B domains span residues 496 to 606 and 607 to 717; these read KYNL…YKTP and KYSL…EEET. Residues 678–975 are disordered; the sequence is TQTGTNTTED…NNSNNGTLFG (298 aa). Composition is skewed to acidic residues over residues 685-695 and 712-934; these read TEDDKDADGGE and YYEE…DSDS. The short motif at 958–962 is the LPXTG sorting signal element; the sequence is LPETG. Over residues 960 to 975 the composition is skewed to low complexity; it reads ETGSENNNSNNGTLFG. Pentaglycyl murein peptidoglycan amidated threonine is present on T961. Positions 962 to 995 are cleaved as a propeptide — removed by sortase; sequence GSENNNSNNGTLFGGLFAALGSLLLFGRRKKQNK.

The protein belongs to the serine-aspartate repeat-containing protein (SDr) family. Homodimerizes; via N2-Domain. Interacts with host NRXN1; this interaction mediates bacterial attachment to host cells.

It is found in the secreted. The protein resides in the cell wall. Cell surface-associated calcium-binding protein which plays an important role in adhesion and pathogenesis. Mediates interactions with components of the extracellular matrix such as host NRXN1 to promote bacterial adhesion. This chain is Serine-aspartate repeat-containing protein C (sdrC), found in Staphylococcus aureus (strain NCTC 8325 / PS 47).